Consider the following 197-residue polypeptide: UPF0200 protein MJ1399 (197 aa).

ATP is bound at residue 8–15 (GMPGAGKS).

Belongs to the UPF0200 family.

This Methanocaldococcus jannaschii (strain ATCC 43067 / DSM 2661 / JAL-1 / JCM 10045 / NBRC 100440) (Methanococcus jannaschii) protein is UPF0200 protein MJ1399.